Reading from the N-terminus, the 292-residue chain is MASSMRSLFSDHGKYVESFRRFLNHSTEHQCMQEFMDKKLPGIIGRIGDTKSEIKILSIGGGAGEIDLQILSKVQAQYPGVCINNEVVEPSAEQIAKYKELVAKTSNLENVKFAWHKETSSEYQSRMLEKKELQKWDFIHMIQMLYYVKDIPATLKFFHSLLGTNAKMLIIVVSGSSGWDKLWKKYGSRFPQDDLCQYITSDDLTQMLDNLGLKYECYDLLSTMDISDCFIDGNENGDLLWDFLTETCNFNATAPPDLRAELGKDLQEPEFSAKKEGKVLFNNTLSFIVIEA.

Residue glutamate 28 participates in substrate binding. Glycine 60, glutamate 89, glutamine 94, serine 120, and isoleucine 142 together coordinate S-adenosyl-L-methionine. Asparagine 283 lines the substrate pocket.

Belongs to the class I-like SAM-binding methyltransferase superfamily. HNMT family. Monomer.

It is found in the cytoplasm. The catalysed reaction is histamine + S-adenosyl-L-methionine = N(tau)-methylhistamine + S-adenosyl-L-homocysteine + H(+). Inactivates histamine by N-methylation. Plays an important role in degrading histamine and in regulating the airway response to histamine. This is Histamine N-methyltransferase (HNMT) from Homo sapiens (Human).